We begin with the raw amino-acid sequence, 252 residues long: Demethylmenaquinone methyltransferase (252 aa).

Residues Thr-64, Asp-85, and 112 to 113 each bind S-adenosyl-L-methionine; that span reads NA.

Belongs to the class I-like SAM-binding methyltransferase superfamily. MenG/UbiE family.

It catalyses the reaction a 2-demethylmenaquinol + S-adenosyl-L-methionine = a menaquinol + S-adenosyl-L-homocysteine + H(+). Its pathway is quinol/quinone metabolism; menaquinone biosynthesis; menaquinol from 1,4-dihydroxy-2-naphthoate: step 2/2. Its function is as follows. Methyltransferase required for the conversion of demethylmenaquinol (DMKH2) to menaquinol (MKH2). The chain is Demethylmenaquinone methyltransferase from Lactococcus lactis subsp. lactis (strain IL1403) (Streptococcus lactis).